The following is a 257-amino-acid chain: Type III pantothenate kinase (257 aa).

6-13 (DVGNTSTK) provides a ligand contact to ATP. A substrate-binding site is contributed by 109-112 (GADR). Aspartate 111 (proton acceptor) is an active-site residue. Residue aspartate 132 participates in K(+) binding. Threonine 135 serves as a coordination point for ATP. Threonine 187 contributes to the substrate binding site.

This sequence belongs to the type III pantothenate kinase family. Homodimer. NH4(+) serves as cofactor. The cofactor is K(+).

The protein resides in the cytoplasm. It catalyses the reaction (R)-pantothenate + ATP = (R)-4'-phosphopantothenate + ADP + H(+). It functions in the pathway cofactor biosynthesis; coenzyme A biosynthesis; CoA from (R)-pantothenate: step 1/5. In terms of biological role, catalyzes the phosphorylation of pantothenate (Pan), the first step in CoA biosynthesis. This chain is Type III pantothenate kinase, found in Anaplasma marginale (strain Florida).